We begin with the raw amino-acid sequence, 508 residues long: Glycerol kinase (508 aa).

ADP is bound at residue Thr15. ATP-binding residues include Thr15, Ser16, and Ser17. A sn-glycerol 3-phosphate-binding site is contributed by Thr15. ADP is bound at residue Arg19. Sn-glycerol 3-phosphate is bound by residues Arg85, Glu86, Tyr138, and Asp251. Glycerol contacts are provided by Arg85, Glu86, Tyr138, Asp251, and Gln252. Residues Thr273, Gly317, and Gly419 each contribute to the ADP site. ATP-binding residues include Thr273, Gly317, and Gly419.

Belongs to the FGGY kinase family.

It catalyses the reaction glycerol + ATP = sn-glycerol 3-phosphate + ADP + H(+). It functions in the pathway polyol metabolism; glycerol degradation via glycerol kinase pathway; sn-glycerol 3-phosphate from glycerol: step 1/1. Inhibited by fructose 1,6-bisphosphate (FBP). In terms of biological role, key enzyme in the regulation of glycerol uptake and metabolism. Catalyzes the phosphorylation of glycerol to yield sn-glycerol 3-phosphate. The protein is Glycerol kinase of Mycoplasma genitalium (strain ATCC 33530 / DSM 19775 / NCTC 10195 / G37) (Mycoplasmoides genitalium).